We begin with the raw amino-acid sequence, 1486 residues long: Collagen alpha-1(II) chain (1486 aa).

An N-terminal signal peptide occupies residues 1–26 (MFSFVDSRTLVLFAATQVILLAVVRC). Positions 27 to 183 (QDEEDVLDTG…PPGLGGNFAA (157 aa)) are cleaved as a propeptide — N-terminal propeptide. Residues 36-94 (GSCVQHGQRYSDKDVWKPEPCQICVCDTGTVLCDDIICEESKDCPNAEIPFGECCPICP) enclose the VWFC domain. Positions 100-1241 (TSSGQGVLKG…EKGPDPMRYM (1142 aa)) are disordered. Composition is skewed to basic and acidic residues over residues 110-121 (QKGEPGDIKDVL) and 138-159 (SRGERGDKGEKGAPGPRGRDGE). The span at 163–175 (PGNPGPVGPPGPP) shows a compositional bias: pro residues. A compositionally biased stretch (low complexity) spans 194–205 (GGAQMGVMQGPM). A triple-helical region region spans residues 203-1216 (GPMGPMGPRG…PGPPGPPGPP (1014 aa)). The span at 210–219 (PRGPPGPTGA) shows a compositional bias: pro residues. A compositionally biased stretch (low complexity) spans 220–231 (PGPQGFQGNPGE). A compositionally biased stretch (gly residues) spans 233–242 (GEPGAGGPMG). The span at 253–267 (PGDDGEAGKPGKSGE) shows a compositional bias: basic and acidic residues. The segment covering 308-317 (GAKGEGGATG) has biased composition (gly residues). 4 stretches are compositionally biased toward low complexity: residues 318–330 (EAGSPGPMGPRGL), 337–346 (PGSSGAAGAR), 363–373 (PAGAPGFPGAP), and 393–421 (PRGESGTPGSPGPAGASGNPGTDGIPGAK). Positions 422–431 (GSSGGPGIAG) are enriched in gly residues. Pro residues predominate over residues 435–444 (FPGPRGPPGP). 2 stretches are compositionally biased toward low complexity: residues 478 to 487 (AGPQGAPGPA) and 498 to 517 (EPGAAGPNGPPGERGAPGNR). Residues 536–551 (GVPGLGGPKGGNGDPG) show a composition bias toward gly residues. Residues P661 and P670 each carry the 4-hydroxyproline modification. At P672 the chain carries 3-hydroxyproline. A 4-hydroxyproline mark is found at P673 and P676. Positions 708-732 (ERGSSGPQGLQGPRGLPGTPGTDGP) are enriched in low complexity. Basic and acidic residues predominate over residues 766-777 (KGDRGDTGEKGP). Positions 891 to 904 (AQGPAGATGFPGAA) are enriched in low complexity. 3 positions are modified to 4-hydroxyproline: P910, P916, and P922. Pro residues predominate over residues 913–922 (NGNPGPPGPP). The span at 936–955 (DAGPPGRAGDPGLQGAAGAP) shows a compositional bias: low complexity. The span at 1007–1016 (GKQGGPGSSG) shows a compositional bias: gly residues. Residues 1102–1116 (SGPAGARGLAGPQGP) are compositionally biased toward low complexity. Basic and acidic residues predominate over residues 1117–1131 (RGDKGEAGEAGERGQ). P1146 is modified (3-hydroxyproline). A compositionally biased stretch (low complexity) spans 1150–1159 (AGDQGATGPA). A 3-hydroxyproline modification is found at P1188. A 4-hydroxyproline modification is found at P1189. A compositionally biased stretch (pro residues) spans 1201-1218 (SGPPGQPGPPGPPGPPGP). P1203 is modified (3-hydroxyproline). 4-hydroxyproline is present on residues P1204 and P1207. A 3-hydroxyproline modification is found at P1209. 2 positions are modified to 4-hydroxyproline: P1210 and P1213. P1215 bears the 3-hydroxyproline mark. P1216 carries the post-translational modification 4-hydroxyproline. The interval 1217 to 1243 (GPGIDMSAFAGLSQPEKGPDPMRYMRA) is nonhelical region (C-terminal). A propeptide spans 1244 to 1486 (DQASNSLPVD…GVDIGPVCFL (243 aa)) (C-terminal propeptide). Residues 1252-1486 (VDVEATLKSL…GVDIGPVCFL (235 aa)) enclose the Fibrillar collagen NC1 domain. 3 cysteine pairs are disulfide-bonded: C1282-C1314, C1322-C1484, and C1392-C1437. Ca(2+) is bound by residues D1300, N1302, Q1303, C1305, and D1308. The N-linked (GlcNAc...) asparagine glycan is linked to N1387.

This sequence belongs to the fibrillar collagen family. In terms of assembly, homotrimers of alpha 1(II) chains. Post-translationally, contains mostly 4-hydroxyproline. Prolines at the third position of the tripeptide repeating unit (G-X-P) are 4-hydroxylated in some or all of the chains. In terms of processing, contains 3-hydroxyproline at a few sites. This modification occurs on the first proline residue in the sequence motif Gly-Pro-Hyp, where Hyp is 4-hydroxyproline. Lysine residues at the third position of the tripeptide repeating unit (G-X-Y) are 5-hydroxylated in some or all of the chains. Post-translationally, O-glycosylated on hydroxylated lysine residues. The O-linked glycan consists of a Glc-Gal disaccharide.

It is found in the secreted. Its subcellular location is the extracellular space. The protein localises to the extracellular matrix. Functionally, type II collagen is specific for cartilaginous tissues. It is essential for the normal embryonic development of the skeleton, for linear growth and for the ability of cartilage to resist compressive forces. The sequence is that of Collagen alpha-1(II) chain from Xenopus laevis (African clawed frog).